Here is a 353-residue protein sequence, read N- to C-terminus: Photosystem II D2 protein (353 aa).

Threonine 2 carries the N-acetylthreonine modification. Phosphothreonine is present on threonine 2. Residues 41–61 traverse the membrane as a helical segment; the sequence is CAYFALGGWFTGTTFVTSWYT. Residue histidine 118 participates in chlorophyll a binding. A helical transmembrane segment spans residues 125-141; sequence GFMLRQFELARSVQLRP. Residues glutamine 130 and asparagine 143 each coordinate pheophytin a. A helical transmembrane segment spans residues 153-166; that stretch reads VFVSVFLIYPLGQS. Histidine 198 lines the chlorophyll a pocket. Residues 208–228 traverse the membrane as a helical segment; the sequence is AALLCAIHGATVENTLFEDGD. A plastoquinone contacts are provided by histidine 215 and phenylalanine 262. Histidine 215 serves as a coordination point for Fe cation. A Fe cation-binding site is contributed by histidine 269. Residues 279-295 form a helical membrane-spanning segment; sequence GLWMSAIGVVGLALNLR.

The protein belongs to the reaction center PufL/M/PsbA/D family. As to quaternary structure, PSII is composed of 1 copy each of membrane proteins PsbA, PsbB, PsbC, PsbD, PsbE, PsbF, PsbH, PsbI, PsbJ, PsbK, PsbL, PsbM, PsbT, PsbX, PsbY, PsbZ, Psb30/Ycf12, at least 3 peripheral proteins of the oxygen-evolving complex and a large number of cofactors. It forms dimeric complexes. The D1/D2 heterodimer binds P680, chlorophylls that are the primary electron donor of PSII, and subsequent electron acceptors. It shares a non-heme iron and each subunit binds pheophytin, quinone, additional chlorophylls, carotenoids and lipids. There is also a Cl(-1) ion associated with D1 and D2, which is required for oxygen evolution. The PSII complex binds additional chlorophylls, carotenoids and specific lipids. serves as cofactor.

It localises to the plastid. It is found in the chloroplast thylakoid membrane. The enzyme catalyses 2 a plastoquinone + 4 hnu + 2 H2O = 2 a plastoquinol + O2. Its function is as follows. Photosystem II (PSII) is a light-driven water:plastoquinone oxidoreductase that uses light energy to abstract electrons from H(2)O, generating O(2) and a proton gradient subsequently used for ATP formation. It consists of a core antenna complex that captures photons, and an electron transfer chain that converts photonic excitation into a charge separation. The D1/D2 (PsbA/PsbD) reaction center heterodimer binds P680, the primary electron donor of PSII as well as several subsequent electron acceptors. D2 is needed for assembly of a stable PSII complex. The sequence is that of Photosystem II D2 protein from Phalaenopsis aphrodite subsp. formosana (Moth orchid).